A 301-amino-acid polypeptide reads, in one-letter code: Pantothenate synthetase (301 aa).

30–37 (MGNLHEGH) provides a ligand contact to ATP. The Proton donor role is filled by histidine 37. Residue glutamine 61 participates in (R)-pantoate binding. Residue glutamine 61 coordinates beta-alanine. ATP is bound at residue 149–152 (GEKD). Residue glutamine 155 participates in (R)-pantoate binding. ATP contacts are provided by residues valine 178 and 186 to 189 (MSSR).

This sequence belongs to the pantothenate synthetase family. Homodimer.

It is found in the cytoplasm. The enzyme catalyses (R)-pantoate + beta-alanine + ATP = (R)-pantothenate + AMP + diphosphate + H(+). The protein operates within cofactor biosynthesis; (R)-pantothenate biosynthesis; (R)-pantothenate from (R)-pantoate and beta-alanine: step 1/1. Functionally, catalyzes the condensation of pantoate with beta-alanine in an ATP-dependent reaction via a pantoyl-adenylate intermediate. In Vibrio vulnificus (strain CMCP6), this protein is Pantothenate synthetase.